The sequence spans 162 residues: Putative ankyrin repeat protein RBE_0151 (162 aa).

3 ANK repeats span residues 49 to 77 (EKWTDLHLAVGYKNIKLVQSVCNKHNINI), 81 to 110 (KGRTALELAILGDNLEIVQFLVQNGGVVAP), and 114 to 145 (YGWSAIHLAIKVGNLDIVKYLYENTKFNEHDK).

The sequence is that of Putative ankyrin repeat protein RBE_0151 from Rickettsia bellii (strain RML369-C).